A 447-amino-acid chain; its full sequence is Ribulose bisphosphate carboxylase large chain (447 aa).

Lys-5 carries the post-translational modification N6,N6,N6-trimethyllysine. Substrate-binding residues include Asn-114 and Thr-164. Lys-166 serves as the catalytic Proton acceptor. Residue Lys-168 coordinates substrate. The Mg(2+) site is built by Lys-192, Asp-194, and Glu-195. Lys-192 is subject to N6-carboxylysine. The active-site Proton acceptor is His-285. Substrate-binding residues include Arg-286, His-318, and Ser-370.

This sequence belongs to the RuBisCO large chain family. Type I subfamily. As to quaternary structure, heterohexadecamer of 8 large chains and 8 small chains; disulfide-linked. The disulfide link is formed within the large subunit homodimers. The cofactor is Mg(2+). Post-translationally, the disulfide bond which can form in the large chain dimeric partners within the hexadecamer appears to be associated with oxidative stress and protein turnover.

The protein resides in the plastid. It is found in the chloroplast. The catalysed reaction is 2 (2R)-3-phosphoglycerate + 2 H(+) = D-ribulose 1,5-bisphosphate + CO2 + H2O. It catalyses the reaction D-ribulose 1,5-bisphosphate + O2 = 2-phosphoglycolate + (2R)-3-phosphoglycerate + 2 H(+). In terms of biological role, ruBisCO catalyzes two reactions: the carboxylation of D-ribulose 1,5-bisphosphate, the primary event in carbon dioxide fixation, as well as the oxidative fragmentation of the pentose substrate in the photorespiration process. Both reactions occur simultaneously and in competition at the same active site. The chain is Ribulose bisphosphate carboxylase large chain from Camassia leichtlinii (Western quamash).